Consider the following 338-residue polypeptide: S-adenosylmethionine:tRNA ribosyltransferase-isomerase (338 aa).

This sequence belongs to the QueA family. Monomer.

The protein resides in the cytoplasm. The catalysed reaction is 7-aminomethyl-7-carbaguanosine(34) in tRNA + S-adenosyl-L-methionine = epoxyqueuosine(34) in tRNA + adenine + L-methionine + 2 H(+). Its pathway is tRNA modification; tRNA-queuosine biosynthesis. In terms of biological role, transfers and isomerizes the ribose moiety from AdoMet to the 7-aminomethyl group of 7-deazaguanine (preQ1-tRNA) to give epoxyqueuosine (oQ-tRNA). The chain is S-adenosylmethionine:tRNA ribosyltransferase-isomerase from Francisella tularensis subsp. mediasiatica (strain FSC147).